We begin with the raw amino-acid sequence, 472 residues long: Gamma-aminobutyric acid receptor subunit beta-2 (472 aa).

A signal peptide spans 1-23 (RVRKKDYFGIWSFPLIIAAVCAQ). Residues 24–239 (SVNDPSNMSL…LSLSFKLKRN (216 aa)) lie on the Extracellular side of the membrane. N30 and N102 each carry an N-linked (GlcNAc...) asparagine glycan. Y119 contacts histamine. The cysteines at positions 158 and 172 are disulfide-linked. Residues 178–179 (SY) and T224 contribute to the histamine site. Y179 and T224 together coordinate 4-aminobutanoate. 3 helical membrane-spanning segments follow: residues 240 to 260 (IGYF…LSWV), 271 to 290 (ARVA…NTHL), and 309 to 329 (GCFV…YIFF). The segment at 287–308 (NTHLRETLPKIPYVKAIDMYLM) is etomidate binding; allosteric effector. Topologically, residues 330-450 (GRGPQRQKKA…LTDVNAIDRW (121 aa)) are cytoplasmic. Y401 is subject to Phosphotyrosine. The helical transmembrane segment at 451–471 (SRIFFPVVFSFFNIVYWLYYV) threads the bilayer.

Belongs to the ligand-gated ion channel (TC 1.A.9) family. Gamma-aminobutyric acid receptor (TC 1.A.9.5) subfamily. GABRB2 sub-subfamily. In terms of assembly, heteropentamer, formed by a combination of alpha (GABRA1-6), beta (GABRB1-3), gamma (GABRG1-3), delta (GABRD), epsilon (GABRE), rho (GABRR1-3), pi (GABRP) and theta (GABRQ) chains, each subunit exhibiting distinct physiological and pharmacological properties. Interacts with UBQLN1. May interact with KIF21B. Identified in a complex of 720 kDa composed of LHFPL4, NLGN2, GABRA1, GABRB2, GABRG2 and GABRB3. Post-translationally, glycosylated.

It is found in the postsynaptic cell membrane. It localises to the cell membrane. The protein localises to the cytoplasmic vesicle membrane. The catalysed reaction is chloride(in) = chloride(out). With respect to regulation, allosterically activated by benzodiazepines. Allosterically activated by the anesthetic etomidate. Inhibited by the antagonist bicuculline. Potentiated by histamine. Its function is as follows. Beta subunit of the heteropentameric ligand-gated chloride channel gated by gamma-aminobutyric acid (GABA), a major inhibitory neurotransmitter in the brain. GABA-gated chloride channels, also named GABA(A) receptors (GABAAR), consist of five subunits arranged around a central pore and contain GABA active binding site(s) located at the alpha and beta subunit interface(s). When activated by GABA, GABAARs selectively allow the flow of chloride anions across the cell membrane down their electrochemical gradient. Chloride influx into the postsynaptic neuron following GABAAR opening decreases the neuron ability to generate a new action potential, thereby reducing nerve transmission. GABAARs containing alpha-1 and beta-2 or -3 subunits exhibit synaptogenic activity; the gamma-2 subunit being necessary but not sufficient to induce rapid synaptic contacts formation. Extrasynaptic beta-2 receptors contribute to the tonic GABAergic inhibition. Beta-containing GABAARs can simultaneously bind GABA and histamine where histamine binds at the interface of two neighboring beta subunits, which may be involved in the regulation of sleep and wakefulness. This is Gamma-aminobutyric acid receptor subunit beta-2 (GABRB2) from Bos taurus (Bovine).